A 344-amino-acid chain; its full sequence is tRNA N6-adenosine threonylcarbamoyltransferase (344 aa).

His111 and His115 together coordinate Fe cation. Substrate contacts are provided by residues Leu134–Gly138, Asp167, Gly180, and Asn274. Residue Asp302 coordinates Fe cation.

It belongs to the KAE1 / TsaD family. Fe(2+) serves as cofactor.

It is found in the cytoplasm. The catalysed reaction is L-threonylcarbamoyladenylate + adenosine(37) in tRNA = N(6)-L-threonylcarbamoyladenosine(37) in tRNA + AMP + H(+). Required for the formation of a threonylcarbamoyl group on adenosine at position 37 (t(6)A37) in tRNAs that read codons beginning with adenine. Is involved in the transfer of the threonylcarbamoyl moiety of threonylcarbamoyl-AMP (TC-AMP) to the N6 group of A37, together with TsaE and TsaB. TsaD likely plays a direct catalytic role in this reaction. The sequence is that of tRNA N6-adenosine threonylcarbamoyltransferase from Dechloromonas aromatica (strain RCB).